A 315-amino-acid polypeptide reads, in one-letter code: Ribosomal RNA small subunit methyltransferase H (315 aa).

S-adenosyl-L-methionine is bound by residues 37 to 39, aspartate 57, phenylalanine 83, aspartate 105, and glutamine 112; that span reads GGH.

Belongs to the methyltransferase superfamily. RsmH family.

The protein resides in the cytoplasm. The enzyme catalyses cytidine(1402) in 16S rRNA + S-adenosyl-L-methionine = N(4)-methylcytidine(1402) in 16S rRNA + S-adenosyl-L-homocysteine + H(+). Functionally, specifically methylates the N4 position of cytidine in position 1402 (C1402) of 16S rRNA. This chain is Ribosomal RNA small subunit methyltransferase H, found in Pseudomonas putida (strain GB-1).